Consider the following 98-residue polypeptide: NADH-ubiquinone oxidoreductase chain 4L (98 aa).

3 consecutive transmembrane segments (helical) span residues 1–21, 29–49, and 61–81; these read MSLV…GLLM, ALLC…LTIL, and IILL…LVMV.

Belongs to the complex I subunit 4L family. In terms of assembly, core subunit of respiratory chain NADH dehydrogenase (Complex I) which is composed of 45 different subunits.

The protein localises to the mitochondrion inner membrane. It catalyses the reaction a ubiquinone + NADH + 5 H(+)(in) = a ubiquinol + NAD(+) + 4 H(+)(out). In terms of biological role, core subunit of the mitochondrial membrane respiratory chain NADH dehydrogenase (Complex I) which catalyzes electron transfer from NADH through the respiratory chain, using ubiquinone as an electron acceptor. Part of the enzyme membrane arm which is embedded in the lipid bilayer and involved in proton translocation. In Lagenorhynchus albirostris (White-beaked dolphin), this protein is NADH-ubiquinone oxidoreductase chain 4L (MT-ND4L).